A 173-amino-acid chain; its full sequence is NAD(P)H-quinone oxidoreductase subunit J (173 aa).

The protein belongs to the complex I 30 kDa subunit family. As to quaternary structure, NDH-1 can be composed of about 15 different subunits; different subcomplexes with different compositions have been identified which probably have different functions.

It localises to the cellular thylakoid membrane. It catalyses the reaction a plastoquinone + NADH + (n+1) H(+)(in) = a plastoquinol + NAD(+) + n H(+)(out). The enzyme catalyses a plastoquinone + NADPH + (n+1) H(+)(in) = a plastoquinol + NADP(+) + n H(+)(out). Its function is as follows. NDH-1 shuttles electrons from an unknown electron donor, via FMN and iron-sulfur (Fe-S) centers, to quinones in the respiratory and/or the photosynthetic chain. The immediate electron acceptor for the enzyme in this species is believed to be plastoquinone. Couples the redox reaction to proton translocation, and thus conserves the redox energy in a proton gradient. Cyanobacterial NDH-1 also plays a role in inorganic carbon-concentration. This is NAD(P)H-quinone oxidoreductase subunit J from Prochlorococcus marinus (strain NATL1A).